A 204-amino-acid polypeptide reads, in one-letter code: Ribosome maturation factor RimP (204 aa).

The segment at 177–204 (NFDESQFDEIQETEGEEADEAETPITRH) is disordered. Over residues 181–198 (SQFDEIQETEGEEADEAE) the composition is skewed to acidic residues.

The protein belongs to the RimP family.

Its subcellular location is the cytoplasm. Its function is as follows. Required for maturation of 30S ribosomal subunits. This chain is Ribosome maturation factor RimP, found in Cereibacter sphaeroides (strain ATCC 17025 / ATH 2.4.3) (Rhodobacter sphaeroides).